The sequence spans 152 residues: Acidic phospholipase A2 57 (152 aa).

An N-terminal signal peptide occupies residues 1–21 (MYPAHLLGLLAVCVSLLGAAS). Positions 22–27 (IPPLPL) are excised as a propeptide. 7 cysteine pairs are disulfide-bonded: Cys38/Cys104, Cys54/Cys151, Cys56/Cys72, Cys71/Cys132, Cys78/Cys125, Cys88/Cys118, and Cys111/Cys123. Positions 55, 57, and 59 each coordinate Ca(2+). Residue His75 is part of the active site. Position 76 (Asp76) interacts with Ca(2+). Residue Asp126 is part of the active site.

The protein belongs to the phospholipase A2 family. Group I subfamily. D49 sub-subfamily. It depends on Ca(2+) as a cofactor. As to expression, expressed by the venom gland.

It is found in the secreted. The catalysed reaction is a 1,2-diacyl-sn-glycero-3-phosphocholine + H2O = a 1-acyl-sn-glycero-3-phosphocholine + a fatty acid + H(+). Functionally, PLA2 catalyzes the calcium-dependent hydrolysis of the 2-acyl groups in 3-sn-phosphoglycerides. This chain is Acidic phospholipase A2 57, found in Hydrophis hardwickii (Hardwick's spine-bellied seasnake).